We begin with the raw amino-acid sequence, 303 residues long: ADP-ribosyl cyclase/cyclic ADP-ribose hydrolase 1 (303 aa).

Residues 1 to 21 lie on the Cytoplasmic side of the membrane; sequence MANYEFSQVSEDRPGCRLTRK. The helical; Signal-anchor for type II membrane protein transmembrane segment at 22 to 44 threads the bilayer; sequence AQIGLGVGLLLLVALVVVVVIVL. Over 45 to 303 the chain is Extracellular; the sequence is WPRSPLVWKG…PEHPSCRLNV (259 aa). 3 disulfides stabilise this stretch: C69/C85, C102/C183, and C163/C176. An N-linked (GlcNAc...) asparagine glycan is attached at N103. C122 is a catalytic residue. A glycan (N-linked (GlcNAc...) asparagine) is linked at N123. The active site involves C204. N-linked (GlcNAc...) asparagine glycans are attached at residues N212 and N222. Intrachain disulfides connect C257/C278 and C290/C299.

This sequence belongs to the ADP-ribosyl cyclase family. As to quaternary structure, homodimer. In terms of tissue distribution, spleen, liver, heart, thymus, thyroid gland, ileum, colon, cerebellum, salivary gland, adrenal gland, jejunum, islets of Langerhans and osteoclasts.

The protein resides in the cell membrane. The catalysed reaction is NAD(+) = cyclic ADP-beta-D-ribose + nicotinamide + H(+). It catalyses the reaction nicotinate + NADP(+) = nicotinate-adenine dinucleotide phosphate + nicotinamide. The enzyme catalyses NAD(+) + H2O = ADP-D-ribose + nicotinamide + H(+). Its activity is regulated as follows. Both NAADP and cADPR synthesis are inhibited by nicotinic acid. Its function is as follows. Synthesizes the second messengers cyclic ADP-ribose and nicotinate-adenine dinucleotide phosphate, the former a second messenger for glucose-induced insulin secretion, the latter a Ca(2+) mobilizer. Also has cADPR hydrolase activity. Functionally, regulates osteoclastic bone resorption, probably via production of cyclic ADP-ribose and triggering of a cytosolic calcium ion signal through ryanodine receptor activation. In Rattus norvegicus (Rat), this protein is ADP-ribosyl cyclase/cyclic ADP-ribose hydrolase 1 (Cd38).